A 101-amino-acid polypeptide reads, in one-letter code: Large ribosomal subunit protein eL30 (101 aa).

It belongs to the eukaryotic ribosomal protein eL30 family.

The sequence is that of Large ribosomal subunit protein eL30 (rpl30e) from Thermococcus celer.